The following is a 230-amino-acid chain: Uracil-DNA glycosylase (230 aa).

The active-site Proton acceptor is the Asp-70.

It belongs to the uracil-DNA glycosylase (UDG) superfamily. UNG family.

It is found in the cytoplasm. The catalysed reaction is Hydrolyzes single-stranded DNA or mismatched double-stranded DNA and polynucleotides, releasing free uracil.. In terms of biological role, excises uracil residues from the DNA which can arise as a result of misincorporation of dUMP residues by DNA polymerase or due to deamination of cytosine. In Pseudomonas putida (strain ATCC 700007 / DSM 6899 / JCM 31910 / BCRC 17059 / LMG 24140 / F1), this protein is Uracil-DNA glycosylase.